A 166-amino-acid chain; its full sequence is UPF0304 protein VV1_2093 (166 aa).

Belongs to the UPF0304 family.

This Vibrio vulnificus (strain CMCP6) protein is UPF0304 protein VV1_2093.